A 171-amino-acid chain; its full sequence is Co-chaperone protein HscB homolog (171 aa).

Residues 2–74 (NHFELFRLPF…ISRAEYMLSE (73 aa)) form the J domain.

Belongs to the HscB family. As to quaternary structure, interacts with HscA and stimulates its ATPase activity.

Co-chaperone involved in the maturation of iron-sulfur cluster-containing proteins. Seems to help targeting proteins to be folded toward HscA. This is Co-chaperone protein HscB homolog from Photobacterium profundum (strain SS9).